A 175-amino-acid chain; its full sequence is Replication restart protein PriC (175 aa).

It belongs to the PriC family. In terms of assembly, monomer. Oligomerizes in the absence of DNA. Component of the replication restart primosome, which is composed of PriA, PriB, PriC, DnaB and DnaT; DnaG primase associates transiently with this complex. Interacts with the C-terminus of SSB; this interaction is required for DnaB loading onto substrate replication forks. Interacts with DnaB alone and in the DnaB-DnaC complex, probably 1:1 binding with DnaB.

In terms of biological role, involved in the restart of stalled replication forks, which reloads the replicative helicase (DnaB) on sites other than the origin of replication. Recognizes abandoned replication forks and remodels DNA single-stranded binding protein (SSB) on ssDNA to uncover a loading site for DnaB. There are several restart pathways, the PriA-PriC pathway is a minor restart pathway. Also part of the minor PriC-Rep pathway for restart of stalled replication forks, which has a different substrate specificity than PriA. priB and priC have redundant roles in the cell. Stimulates the 3'-5' helicase activity of Rep helicase in vitro. In vitro can load the DnaB replicative helicase from a DnaB-DnaC complex on an SSB-coated stalled replication fork with no leading- or lagging-strand (or with a gap between the leading strand and fork junction) in the absence of other primosome proteins (PriA, PriB or DnaT). Also part of the major restart pathway with PriA, PriB, DnaB, DnaT and DnaG primase. PriC may contribute to the stability of the preprimosome complex. Preferentially binds approximately 7-9 nucleotides of single-stranded (ss)DNA, also binds double-stranded (ds)DNA. PriB is probably more important in the cell than PriC. This Escherichia coli (strain K12) protein is Replication restart protein PriC.